Consider the following 638-residue polypeptide: XK-related protein 6 (638 aa).

Disordered regions lie at residues Val-24–Gly-43 and Arg-82–Pro-117. Gly residues predominate over residues Pro-33–Gly-43. Transmembrane regions (helical) follow at residues Leu-127 to Ala-147, Cys-158 to Phe-178, Thr-315 to Tyr-335, Val-369 to Val-389, Trp-410 to Val-430, Met-439 to Phe-459, and Ala-470 to Leu-490.

The protein belongs to the XK family.

The protein resides in the cell membrane. The chain is XK-related protein 6 from Mus musculus (Mouse).